The primary structure comprises 198 residues: Probable nicotinate-nucleotide adenylyltransferase (198 aa).

This sequence belongs to the NadD family.

The catalysed reaction is nicotinate beta-D-ribonucleotide + ATP + H(+) = deamido-NAD(+) + diphosphate. It participates in cofactor biosynthesis; NAD(+) biosynthesis; deamido-NAD(+) from nicotinate D-ribonucleotide: step 1/1. Its function is as follows. Catalyzes the reversible adenylation of nicotinate mononucleotide (NaMN) to nicotinic acid adenine dinucleotide (NaAD). The polypeptide is Probable nicotinate-nucleotide adenylyltransferase (Herpetosiphon aurantiacus (strain ATCC 23779 / DSM 785 / 114-95)).